The sequence spans 217 residues: Probable transaldolase (217 aa).

Residue lysine 83 is the Schiff-base intermediate with substrate of the active site.

It belongs to the transaldolase family. Type 3B subfamily.

Its subcellular location is the cytoplasm. It carries out the reaction D-sedoheptulose 7-phosphate + D-glyceraldehyde 3-phosphate = D-erythrose 4-phosphate + beta-D-fructose 6-phosphate. The protein operates within carbohydrate degradation; pentose phosphate pathway; D-glyceraldehyde 3-phosphate and beta-D-fructose 6-phosphate from D-ribose 5-phosphate and D-xylulose 5-phosphate (non-oxidative stage): step 2/3. In terms of biological role, transaldolase is important for the balance of metabolites in the pentose-phosphate pathway. The sequence is that of Probable transaldolase from Novosphingobium aromaticivorans (strain ATCC 700278 / DSM 12444 / CCUG 56034 / CIP 105152 / NBRC 16084 / F199).